We begin with the raw amino-acid sequence, 67 residues long: Large ribosomal subunit protein bL35 (67 aa).

It belongs to the bacterial ribosomal protein bL35 family.

The protein is Large ribosomal subunit protein bL35 of Sinorhizobium fredii (strain NBRC 101917 / NGR234).